We begin with the raw amino-acid sequence, 158 residues long: NADH-quinone oxidoreductase subunit B (158 aa).

4 residues coordinate [4Fe-4S] cluster: Cys-37, Cys-38, Cys-102, and Cys-132.

This sequence belongs to the complex I 20 kDa subunit family. As to quaternary structure, NDH-1 is composed of 14 different subunits. Subunits NuoB, C, D, E, F, and G constitute the peripheral sector of the complex. [4Fe-4S] cluster serves as cofactor.

It is found in the cell inner membrane. The catalysed reaction is a quinone + NADH + 5 H(+)(in) = a quinol + NAD(+) + 4 H(+)(out). Its function is as follows. NDH-1 shuttles electrons from NADH, via FMN and iron-sulfur (Fe-S) centers, to quinones in the respiratory chain. Couples the redox reaction to proton translocation (for every two electrons transferred, four hydrogen ions are translocated across the cytoplasmic membrane), and thus conserves the redox energy in a proton gradient. In Leptothrix cholodnii (strain ATCC 51168 / LMG 8142 / SP-6) (Leptothrix discophora (strain SP-6)), this protein is NADH-quinone oxidoreductase subunit B.